Reading from the N-terminus, the 116-residue chain is Phosphoribosyl-AMP cyclohydrolase (116 aa).

Asp82 contacts Mg(2+). A Zn(2+)-binding site is contributed by Cys83. Mg(2+) contacts are provided by Asp84 and Asp86. Cys99 and Cys106 together coordinate Zn(2+).

The protein belongs to the PRA-CH family. Homodimer. Mg(2+) is required as a cofactor. Requires Zn(2+) as cofactor.

The protein localises to the cytoplasm. The catalysed reaction is 1-(5-phospho-beta-D-ribosyl)-5'-AMP + H2O = 1-(5-phospho-beta-D-ribosyl)-5-[(5-phospho-beta-D-ribosylamino)methylideneamino]imidazole-4-carboxamide. It functions in the pathway amino-acid biosynthesis; L-histidine biosynthesis; L-histidine from 5-phospho-alpha-D-ribose 1-diphosphate: step 3/9. Functionally, catalyzes the hydrolysis of the adenine ring of phosphoribosyl-AMP. In Saccharopolyspora erythraea (strain ATCC 11635 / DSM 40517 / JCM 4748 / NBRC 13426 / NCIMB 8594 / NRRL 2338), this protein is Phosphoribosyl-AMP cyclohydrolase.